The chain runs to 112 residues: Reprimo-like protein (112 aa).

The chain crosses the membrane as a helical span at residues 59 to 79 (VVQIAVLCVLSLTVLFGIFFL).

The protein belongs to the reprimo family.

The protein localises to the membrane. In Xenopus laevis (African clawed frog), this protein is Reprimo-like protein (rprml).